The chain runs to 298 residues: Probable endonuclease 4 (298 aa).

The Zn(2+) site is built by His-69, His-110, Glu-145, Asp-179, His-182, His-214, Asp-227, His-229, and Glu-259.

Belongs to the AP endonuclease 2 family. It depends on Zn(2+) as a cofactor.

The catalysed reaction is Endonucleolytic cleavage to 5'-phosphooligonucleotide end-products.. In terms of biological role, endonuclease IV plays a role in DNA repair. It cleaves phosphodiester bonds at apurinic or apyrimidinic (AP) sites, generating a 3'-hydroxyl group and a 5'-terminal sugar phosphate. The sequence is that of Probable endonuclease 4 from Geobacillus sp. (strain WCH70).